Reading from the N-terminus, the 396-residue chain is Alpha-galactosidase 2 (396 aa).

A signal peptide spans 1 to 25 (MVLLSFSLRFIAFTLTITLTQIADG). Disulfide bonds link Cys-52-Cys-84 and Cys-132-Cys-163. Asn-55 carries an N-linked (GlcNAc...) asparagine glycan. Substrate is bound by residues 82 to 83 (DD) and Lys-159. The active-site Nucleophile is Asp-161. Residues 194-198 (EWGQE), Arg-212, and Asp-216 contribute to the substrate site. Catalysis depends on Asp-216, which acts as the Proton donor. 2 N-linked (GlcNAc...) asparagine glycosylation sites follow: Asn-343 and Asn-354.

This sequence belongs to the glycosyl hydrolase 27 family. Homodimer.

Its subcellular location is the secreted. It localises to the cell wall. It is found in the extracellular space. The protein localises to the apoplast. The catalysed reaction is Hydrolysis of terminal, non-reducing alpha-D-galactose residues in alpha-D-galactosides, including galactose oligosaccharides, galactomannans and galactolipids.. In terms of biological role, may regulate leaf (and possibly other organ) development by functioning in cell wall loosening and cell wall expansion. The sequence is that of Alpha-galactosidase 2 from Arabidopsis thaliana (Mouse-ear cress).